We begin with the raw amino-acid sequence, 344 residues long: Holliday junction branch migration complex subunit RuvB (344 aa).

The large ATPase domain (RuvB-L) stretch occupies residues 1–185; the sequence is MTERSDRDVS…FGFTAHMDFY (185 aa). ATP-binding positions include leucine 24, arginine 25, glycine 66, lysine 69, threonine 70, serine 71, 132 to 134, arginine 175, tyrosine 185, and arginine 222; that span reads EDF. Residue threonine 70 coordinates Mg(2+). Residues 186-256 are small ATPAse domain (RuvB-S); that stretch reads EPAELERVLA…VAKAALEVYD (71 aa). Residues 259-344 are head domain (RuvB-H); it reads ELGLDRLDRA…VGASQPGLFE (86 aa). 2 residues coordinate DNA: arginine 314 and arginine 319.

It belongs to the RuvB family. As to quaternary structure, homohexamer. Forms an RuvA(8)-RuvB(12)-Holliday junction (HJ) complex. HJ DNA is sandwiched between 2 RuvA tetramers; dsDNA enters through RuvA and exits via RuvB. An RuvB hexamer assembles on each DNA strand where it exits the tetramer. Each RuvB hexamer is contacted by two RuvA subunits (via domain III) on 2 adjacent RuvB subunits; this complex drives branch migration. In the full resolvosome a probable DNA-RuvA(4)-RuvB(12)-RuvC(2) complex forms which resolves the HJ.

The protein resides in the cytoplasm. It carries out the reaction ATP + H2O = ADP + phosphate + H(+). In terms of biological role, the RuvA-RuvB-RuvC complex processes Holliday junction (HJ) DNA during genetic recombination and DNA repair, while the RuvA-RuvB complex plays an important role in the rescue of blocked DNA replication forks via replication fork reversal (RFR). RuvA specifically binds to HJ cruciform DNA, conferring on it an open structure. The RuvB hexamer acts as an ATP-dependent pump, pulling dsDNA into and through the RuvAB complex. RuvB forms 2 homohexamers on either side of HJ DNA bound by 1 or 2 RuvA tetramers; 4 subunits per hexamer contact DNA at a time. Coordinated motions by a converter formed by DNA-disengaged RuvB subunits stimulates ATP hydrolysis and nucleotide exchange. Immobilization of the converter enables RuvB to convert the ATP-contained energy into a lever motion, pulling 2 nucleotides of DNA out of the RuvA tetramer per ATP hydrolyzed, thus driving DNA branch migration. The RuvB motors rotate together with the DNA substrate, which together with the progressing nucleotide cycle form the mechanistic basis for DNA recombination by continuous HJ branch migration. Branch migration allows RuvC to scan DNA until it finds its consensus sequence, where it cleaves and resolves cruciform DNA. This chain is Holliday junction branch migration complex subunit RuvB, found in Mycobacterium tuberculosis (strain ATCC 25177 / H37Ra).